The sequence spans 1589 residues: Pentafunctional AROM polypeptide (1589 aa).

The 3-dehydroquinate synthase stretch occupies residues 1 to 384 (MAAPTTIKIL…HEQQASVVSN (384 aa)). NAD(+) contacts are provided by residues 44–46 (DTT), 81–84 (ELSK), 114–116 (GGV), and D119. R130 is a 7-phospho-2-dehydro-3-deoxy-D-arabino-heptonate binding site. NAD(+) is bound at residue 139 to 140 (TT). 7-phospho-2-dehydro-3-deoxy-D-arabino-heptonate contacts are provided by D146 and K152. An NAD(+)-binding site is contributed by K161. N162 is a binding site for 7-phospho-2-dehydro-3-deoxy-D-arabino-heptonate. Residues 179–182 (FLNT) and N190 contribute to the NAD(+) site. E194 provides a ligand contact to Zn(2+). Residues 194 to 197 (EVIK) and K250 contribute to the 7-phospho-2-dehydro-3-deoxy-D-arabino-heptonate site. Catalysis depends on E260, which acts as the Proton acceptor; for 3-dehydroquinate synthase activity. 7-phospho-2-dehydro-3-deoxy-D-arabino-heptonate contacts are provided by residues 264 to 268 (RNLLN) and H271. Zn(2+) is bound at residue H271. H275 functions as the Proton acceptor; for 3-dehydroquinate synthase activity in the catalytic mechanism. Residues H287 and K356 each contribute to the 7-phospho-2-dehydro-3-deoxy-D-arabino-heptonate site. Residue H287 participates in Zn(2+) binding. Positions 397–841 (VSPGVPKSLQ…WDTLAQLFKA (445 aa)) are EPSP synthase. The For EPSP synthase activity role is filled by C823. A shikimate kinase region spans residues 861 to 1052 (ASIFIIGMRG…KKKPQSFFVS (192 aa)). 867-874 (GMRGAGKT) is a binding site for ATP. A 3-dehydroquinase region spans residues 1053–1273 (LTLPDLRPSA…AAPGQLSAQD (221 aa)). H1176 (proton acceptor; for 3-dehydroquinate dehydratase activity) is an active-site residue. Residue K1204 is the Schiff-base intermediate with substrate; for 3-dehydroquinate dehydratase activity of the active site. The interval 1286-1589 (PRKFAIFGKP…VMNPGTDNRG (304 aa)) is shikimate dehydrogenase.

The protein in the N-terminal section; belongs to the sugar phosphate cyclases superfamily. Dehydroquinate synthase family. This sequence in the 2nd section; belongs to the EPSP synthase family. In the 3rd section; belongs to the shikimate kinase family. It in the 4th section; belongs to the type-I 3-dehydroquinase family. The protein in the C-terminal section; belongs to the shikimate dehydrogenase family. As to quaternary structure, homodimer. Requires Zn(2+) as cofactor.

The protein resides in the cytoplasm. The catalysed reaction is 7-phospho-2-dehydro-3-deoxy-D-arabino-heptonate = 3-dehydroquinate + phosphate. It carries out the reaction 3-dehydroquinate = 3-dehydroshikimate + H2O. The enzyme catalyses shikimate + NADP(+) = 3-dehydroshikimate + NADPH + H(+). It catalyses the reaction shikimate + ATP = 3-phosphoshikimate + ADP + H(+). The catalysed reaction is 3-phosphoshikimate + phosphoenolpyruvate = 5-O-(1-carboxyvinyl)-3-phosphoshikimate + phosphate. It functions in the pathway metabolic intermediate biosynthesis; chorismate biosynthesis; chorismate from D-erythrose 4-phosphate and phosphoenolpyruvate: step 2/7. It participates in metabolic intermediate biosynthesis; chorismate biosynthesis; chorismate from D-erythrose 4-phosphate and phosphoenolpyruvate: step 3/7. Its pathway is metabolic intermediate biosynthesis; chorismate biosynthesis; chorismate from D-erythrose 4-phosphate and phosphoenolpyruvate: step 4/7. The protein operates within metabolic intermediate biosynthesis; chorismate biosynthesis; chorismate from D-erythrose 4-phosphate and phosphoenolpyruvate: step 5/7. It functions in the pathway metabolic intermediate biosynthesis; chorismate biosynthesis; chorismate from D-erythrose 4-phosphate and phosphoenolpyruvate: step 6/7. Its function is as follows. The AROM polypeptide catalyzes 5 consecutive enzymatic reactions in prechorismate polyaromatic amino acid biosynthesis. This Coccidioides posadasii (strain C735) (Valley fever fungus) protein is Pentafunctional AROM polypeptide.